The primary structure comprises 643 residues: MNANPKFLSADAHVDAAAVAPLPNSRKVYVTGSQPDIRVPMREITQADTPTGFGGEKNPPIYVYDTSGPYTDPDAKIDIRAGLPALRQGWIEARGDTEVLPGLSSQYGLERAADPATADLRFPGLHRHPRRAQPGKNVTQMHYARQGIITPEMEYIAIRENQRRAEYIESLKSSGPNGAKLAAMMGRQHPGQAFGAAAFGANALAEITPEFVRDEVARGRAIIPANINHPESEPMIIGRNFLVKINANIGNSAVTSSIGEEVDKMTWAIRWGGDTVMDLSTGKHIHETREWIIRNSPVPIGTVPIYQALEKVNGKAEDLTWEIFRDTLIEQAEQGVDYFTIHAGVRLQYVPLTANRMTGIVSRGGSIMAKWCLAHHKESFLYEHFEEICEIMKAYDVSFSLGDGLRPGSIYDANDEAQLGELKTLGELTQIAWKHDVQVMIEGPGHVPMQLIKENMDLQLDWCKEAPFYTLGPLTTDIAPGYDHITSGIGAAMIGWFGTAMLCYVTPKEHLGLPNKDDVKEGIITYKLAAHAADLAKGHPGAQVRDNALSKARFEFRWEDQFNIGLDPDKAREFHDETLPKDSAKVAHFCSMCGPHFCSMKITQDVREFAAQQGVSETEALKKGMEVKAVEFVKTGAEIYHRQ.

Substrate contacts are provided by residues Asn-248, Met-277, Tyr-306, His-342, 362–364, 403–406, and Glu-442; these read SRG and DGLR. Residue His-446 coordinates Zn(2+). Tyr-469 is a substrate binding site. His-510 serves as a coordination point for Zn(2+). The [4Fe-4S] cluster site is built by Cys-590, Cys-593, and Cys-598.

This sequence belongs to the ThiC family. As to quaternary structure, homodimer. It depends on [4Fe-4S] cluster as a cofactor.

The enzyme catalyses 5-amino-1-(5-phospho-beta-D-ribosyl)imidazole + S-adenosyl-L-methionine = 4-amino-2-methyl-5-(phosphooxymethyl)pyrimidine + CO + 5'-deoxyadenosine + formate + L-methionine + 3 H(+). It participates in cofactor biosynthesis; thiamine diphosphate biosynthesis. Catalyzes the synthesis of the hydroxymethylpyrimidine phosphate (HMP-P) moiety of thiamine from aminoimidazole ribotide (AIR) in a radical S-adenosyl-L-methionine (SAM)-dependent reaction. In Burkholderia orbicola (strain MC0-3), this protein is Phosphomethylpyrimidine synthase.